Reading from the N-terminus, the 405-residue chain is Magnesium-protoporphyrin IX monomethyl ester [oxidative] cyclase, chloroplastic (405 aa).

The transit peptide at M1 to T44 directs the protein to the chloroplast. The segment covering M33 to K47 has biased composition (low complexity). The tract at residues M33–K54 is disordered.

The protein belongs to the AcsF family. Fe cation serves as cofactor.

It localises to the plastid. The protein resides in the chloroplast. It carries out the reaction Mg-protoporphyrin IX 13-monomethyl ester + 3 NADPH + 3 O2 + 2 H(+) = 3,8-divinyl protochlorophyllide a + 3 NADP(+) + 5 H2O. It participates in porphyrin-containing compound metabolism; chlorophyll biosynthesis. Functionally, catalyzes the formation of the isocyclic ring in chlorophyll biosynthesis. Mediates the cyclase reaction, which results in the formation of divinylprotochlorophyllide (Pchlide) characteristic of all chlorophylls from magnesium-protoporphyrin IX 13-monomethyl ester (MgPMME). The polypeptide is Magnesium-protoporphyrin IX monomethyl ester [oxidative] cyclase, chloroplastic (CRD1) (Euphorbia esula (Leafy spurge)).